Reading from the N-terminus, the 188-residue chain is Peptide deformylase (188 aa).

Residues 70–90 are disordered; the sequence is AEPVACDHDGHHHHHQPTKKE. 2 residues coordinate Fe cation: cysteine 113 and histidine 155. Glutamate 156 is a catalytic residue. Histidine 159 contributes to the Fe cation binding site.

This sequence belongs to the polypeptide deformylase family. Fe(2+) is required as a cofactor.

It catalyses the reaction N-terminal N-formyl-L-methionyl-[peptide] + H2O = N-terminal L-methionyl-[peptide] + formate. Removes the formyl group from the N-terminal Met of newly synthesized proteins. Requires at least a dipeptide for an efficient rate of reaction. N-terminal L-methionine is a prerequisite for activity but the enzyme has broad specificity at other positions. The sequence is that of Peptide deformylase from Novosphingobium aromaticivorans (strain ATCC 700278 / DSM 12444 / CCUG 56034 / CIP 105152 / NBRC 16084 / F199).